We begin with the raw amino-acid sequence, 319 residues long: Phosphatidylglycerol--prolipoprotein diacylglyceryl transferase (319 aa).

3 helical membrane passes run 21–41, 50–70, and 98–118; these read PIPIRAYAMCIIAGIIVAIWL, GGNPEIVLDAAIVAVPAGIIG, and NGGLGIWGAVILGGLAVAVFF. R144 is an a 1,2-diacyl-sn-glycero-3-phospho-(1'-sn-glycerol) binding site. 2 consecutive transmembrane segments (helical) span residues 191 to 211 and 254 to 274; these read VHPTFLYELLWNLLIFALLMW and INTIVSAVVFAGAIIVFFLLK. The segment at 295 to 319 is disordered; sequence AVASPDGKPLPKAGEGIDGETPSTR.

The protein belongs to the Lgt family.

The protein resides in the cell membrane. The enzyme catalyses L-cysteinyl-[prolipoprotein] + a 1,2-diacyl-sn-glycero-3-phospho-(1'-sn-glycerol) = an S-1,2-diacyl-sn-glyceryl-L-cysteinyl-[prolipoprotein] + sn-glycerol 1-phosphate + H(+). It participates in protein modification; lipoprotein biosynthesis (diacylglyceryl transfer). In terms of biological role, catalyzes the transfer of the diacylglyceryl group from phosphatidylglycerol to the sulfhydryl group of the N-terminal cysteine of a prolipoprotein, the first step in the formation of mature lipoproteins. The protein is Phosphatidylglycerol--prolipoprotein diacylglyceryl transferase of Corynebacterium glutamicum (strain R).